Reading from the N-terminus, the 87-residue chain is U3-theraphotoxin-Hhn1a 5 (87 aa).

The signal sequence occupies residues 1–24 (MVNMKASMFLTFAGLVLLFVVCYA). The propeptide occupies 25–52 (SESEEKEFPKEMLSSIFAVDNDFKQEER). 3 disulfides stabilise this stretch: Cys54–Cys67, Cys61–Cys72, and Cys66–Cys79.

This sequence belongs to the neurotoxin 10 (Hwtx-1) family. 51 (Hntx-8) subfamily. Hntx-8 sub-subfamily. In terms of tissue distribution, expressed by the venom gland.

The protein resides in the secreted. Functionally, ion channel inhibitor. In Cyriopagopus hainanus (Chinese bird spider), this protein is U3-theraphotoxin-Hhn1a 5.